The sequence spans 298 residues: Lysozyme-like protein 1 (298 aa).

Positions 1–16 (MLKLAFVTFLFALASA) are cleaved as a signal peptide. The Ch-type lysozyme domain maps to 59 to 277 (YAYAVDISVP…AAASSKNTDF (219 aa)).

This sequence belongs to the glycosyl hydrolase 25 family. Expressed in intestine, IL2 and IL6 neurons and some neurons in the head ganglia.

The protein resides in the cytoplasmic vesicle lumen. Functionally, involved in resistance to Gram-negative bacterium S.marcescens and to bacterium Gram-positive S.aureus infection. The polypeptide is Lysozyme-like protein 1 (Caenorhabditis elegans).